A 1101-amino-acid polypeptide reads, in one-letter code: MVSRRSSQARGALTAVVATLALALAGSGTALAASPIGEGTFDDGPEGWVAYGTDGPLDTSTGALCVAVPAGSAQYGVGVVLNGVAIEEGTTYTLRYTATASTDVTVRALVGQNGAPYGTVLDTSPALTSEPRQVTETFTASATYPATPAADDPEGQIAFQLGGFSADAWTFCLDDVALDSEVELLPHTSFAESLGPWSLYGTSEPVFADGRMCVDLPGGQGNPWDAGLVYNGVPVGEGESYVLSFTASATPDMPVRVLVGEGGGAYRTAFEQGSAPLTGEPATREYAFTSNLTFPPDGDAPGQVAFHLGKAGAYEFCISQVSLTTSATPPPGYEPDTGPRVRVNQVGYLPFGPKRATLVTDAAEPVAWELRDADGVVVADGTSEPRGVEPSAAQAVHVLDFSDVTTQGAGYTLVADGETSRPFDIDGDLYQQLRYDALNYFYLARSGTEIEADVVGEEYAREAGHVGVAPNQGDTDVPCIGPRDYYDGWTCDYRLDVSGGWYDAGDHGKYVVNGGIAVGQLLQTYERALHAGTADALADGTLDVPEHGNDVPDVLDEARWELEWMLSMIVPEGEYAGMVHHKVHDEGWTGLPLLPADDPQARSLHRPSTAATLNLSAVAAQGARLLEPYDPQLAQTLLEAARTTWAAAQEHPALYAPGEAGADGGGAYNDSQVADEFYWAAAELYLTTGEDAFATAVTTSPLHTADVFTADGFGWGSVAALGRLDLATVPNELPGLDAVQSSVVEGAQEYLAAQAGQGFGSLYSPPGGEYVWGSSSQVANNLVVVATAYDLTGDERFRAATLEGLDYLFGRNALNQSYVTGWGEVASHQQHSRWFAHQLDPSLPSPPPGSLAGGPNSQAATWDPTTKAAFPDGCAPSACYVDEIQAWSTNELTVNWNSALSWVASWVADQGSAEPVPTAPVVTRQPVDATVALGADATFTAEASGVPAPTVRWQVRAGRGWKDVAGATGTTLTVRATARTDGTRYRAVFTNAAGSVESAVVRLTVERAAPVVTQHPADVRARVGTRAVFRAAADGYPTPCVVWQVRWGGGSWRPIPWATSTTLSVPVTVLAAGTEYRAVFTNAVGTAATEPAELAVQRPRS.

The signal sequence occupies residues 1 to 32 (MVSRRSSQARGALTAVVATLALALAGSGTALA). CBM-cenC domains are found at residues 64–173 (LCVA…TFCL) and 212–318 (MCVD…EFCI). The segment at 329–880 (PPPGYEPDTG…PDGCAPSACY (552 aa)) is catalytic. The active-site Nucleophile is aspartate 506. Histidine 831 is a catalytic residue. The interval 838–865 (QLDPSLPSPPPGSLAGGPNSQAATWDPT) is disordered. Residues aspartate 882 and glutamate 891 contribute to the active site. Ig-like domains are found at residues 918–1006 (TAPV…LTVE) and 1008–1097 (AAPV…LAVQ).

Belongs to the glycosyl hydrolase 9 (cellulase E) family.

The catalysed reaction is Endohydrolysis of (1-&gt;4)-beta-D-glucosidic linkages in cellulose, lichenin and cereal beta-D-glucans.. Its function is as follows. The biological conversion of cellulose to glucose generally requires three types of hydrolytic enzymes: (1) Endoglucanases which cut internal beta-1,4-glucosidic bonds; (2) Exocellobiohydrolases that cut the disaccharide cellobiose from the non-reducing end of the cellulose polymer chain; (3) Beta-1,4-glucosidases which hydrolyze the cellobiose and other short cello-oligosaccharides to glucose. The sequence is that of Endoglucanase C (cenC) from Cellulomonas fimi (strain ATCC 484 / DSM 20113 / JCM 1341 / CCUG 24087 / LMG 16345 / NBRC 15513 / NCIMB 8980 / NCTC 7547 / NRS-133).